The sequence spans 378 residues: MATVTFDKATRVYPGSTKPAVDGLDIDIADGEFLVLVGPSGCGKSTSLRMLAGLEDVNGGAIRIGDRDVTHLPPKDRDIAMVFQNYALYPHMSVADNMGFALKIAGVNKAEIRQKVEEAAKILDLTEYLDRKPKALSGGQRQRVAMGRAIVREPQVFLMDEPLSNLDAKLRVSTRTQIASLQRRLGITTVYVTHDQVEAMTMGDRVAVLKDGLLQQVDSPRNMYDKPANLFVAGFIGSPAMNLVEVPITDGGVKFGNSVVPVNRDALKAASDKGDRTVTVGVRPEHFDVVELNGGAAKTLSKDSADAPAGLAVSVNVVEETGADGYIYGTVEVGGETKDLVVRVSSRAVPEKGATVHVVPRPGEIHVFSSSTGERLTD.

The 233-residue stretch at 4 to 236 folds into the ABC transporter domain; the sequence is VTFDKATRVY…PANLFVAGFI (233 aa). 38 to 45 is a binding site for ATP; it reads GPSGCGKS.

It belongs to the ABC transporter superfamily. In terms of assembly, the DasABC-MsiK complex is composed of two ATP-binding proteins (MsiK), two transmembrane proteins (DasB and DasC) and a solute-binding protein (DasA). The NgcEFG-MsiK complex is composed of two ATP-binding proteins (MsiK), two transmembrane proteins (NgcF and NgcG) and a solute-binding protein (NgcE).

The protein resides in the cell membrane. In terms of biological role, part of the ABC transporter complexes DasABC-MsiK and NgcEFG-MsiK involved in N,N'-diacetylchitobiose ((GlcNAc)2) uptake. Responsible for energy coupling to the transport system. This is Diacetylchitobiose uptake system ATP-binding protein MsiK from Streptomyces coelicolor (strain ATCC BAA-471 / A3(2) / M145).